We begin with the raw amino-acid sequence, 811 residues long: Actin filament-associated protein 1-like 2 (811 aa).

Disordered stretches follow at residues 67–110 (KEAQ…PPPK) and 132–168 (EPYN…QQHQ). One can recognise a PH 1 domain in the interval 181–277 (DAMICAFLWR…WLKVIQDISG (97 aa)). The interval 294–326 (QRQIHPKAEGTDRHSGASESGSSTDGHPETPEI) is disordered. Residues 299 to 309 (PKAEGTDRHSG) show a composition bias toward basic and acidic residues. Residues 359-453 (ALETSNYLNV…WLGLLLLESG (95 aa)) form the PH 2 domain. 2 disordered regions span residues 500–532 (RGQR…GEAE) and 558–631 (LGSP…KERV). Composition is skewed to basic and acidic residues over residues 521–532 (DEPKSEEKGEAE), 566–577 (VSGKKDNEESER), and 622–631 (RLEKSNKERV). Residues 642 to 737 (LLGKNRTEAE…KENLRKAELG (96 aa)) are a coiled coil.

As to quaternary structure, interacts with src.

The protein resides in the cytoplasm. In terms of biological role, may play a role in a signaling cascade by enhancing the kinase activity of src. Contributes to src-regulated transcription activation. The sequence is that of Actin filament-associated protein 1-like 2 (afap1l2) from Xenopus laevis (African clawed frog).